Consider the following 542-residue polypeptide: Chromatin structure-remodeling complex subunit rsc4 (542 aa).

The region spanning His6–Asp116 is the Bromo 1 domain. Disordered regions lie at residues Ser114–Thr139 and Ile246–Glu327. A compositionally biased stretch (acidic residues) spans Leu119–Glu128. A Bromo 2 domain is found at Thr139 to Phe249. Residues Gln252–Glu266 are compositionally biased toward basic and acidic residues. Phosphoserine is present on residues Ser257, Ser271, Ser287, and Ser313. Residues Thr268–Thr280 show a composition bias toward low complexity. Polar residues predominate over residues Thr286 to Ala298. The span at Leu304 to Gln322 shows a compositional bias: basic and acidic residues.

In terms of assembly, component of the RSC complex composed of at least arp9, arp42, rsc1, rsc4, rsc7, rsc9, rsc58, sfh1, snf21, ssr1, ssr2, ssr3 and ssr4. The complex interacts with histone and histone variant components of centromeric chromatin.

The protein localises to the nucleus. Functionally, component of the chromatin structure remodeling complex (RSC), which is involved in transcription regulation and nucleosome positioning. Controls particularly membrane and organelle development genes. The protein is Chromatin structure-remodeling complex subunit rsc4 (rsc4) of Schizosaccharomyces pombe (strain 972 / ATCC 24843) (Fission yeast).